A 107-amino-acid polypeptide reads, in one-letter code: MTTGGFDLGGLDIGALLAQAQSVQNQLEAAQNQLAESNFEGTAGGGLVRATVTGTGELDALTIAPEALEDTDAETLADLVVAAVKDATGQARAMQQSLMPQMPSLGL.

Belongs to the YbaB/EbfC family. In terms of assembly, homodimer.

The protein localises to the cytoplasm. It is found in the nucleoid. Functionally, binds to DNA and alters its conformation. May be involved in regulation of gene expression, nucleoid organization and DNA protection. The polypeptide is Nucleoid-associated protein PPA0205 (Cutibacterium acnes (strain DSM 16379 / KPA171202) (Propionibacterium acnes)).